Reading from the N-terminus, the 204-residue chain is NAD(P)H dehydrogenase (quinone) (204 aa).

In terms of domain architecture, Flavodoxin-like spans 4–195 (IQIVFYSMYG…AIARFQGAHV (192 aa)). Residues 10-15 (SMYGHI) and 83-85 (TRF) each bind FMN. Residue tyrosine 12 coordinates NAD(+). Residue tryptophan 103 participates in substrate binding. Residues 118–124 (STATQHG) and histidine 139 each bind FMN.

This sequence belongs to the WrbA family. Requires FMN as cofactor.

It carries out the reaction a quinone + NADH + H(+) = a quinol + NAD(+). The catalysed reaction is a quinone + NADPH + H(+) = a quinol + NADP(+). This is NAD(P)H dehydrogenase (quinone) from Trichlorobacter lovleyi (strain ATCC BAA-1151 / DSM 17278 / SZ) (Geobacter lovleyi).